Here is a 476-residue protein sequence, read N- to C-terminus: Ureidoglycolate hydrolase (476 aa).

Residues 1–25 form the signal peptide; that stretch reads MESLKRFLCSIALLLISLLLPSSLA. 4 residues coordinate Mn(2+): His-138, Asp-149, Glu-184, and His-254. Substrate is bound by residues 183-184, 254-257, His-290, Asn-340, Arg-353, 423-424, and His-448; these read EE, HIEQ, and YH. The tract at residues 276-391 is involved in dimerization; that stretch reads APASLKVEFE…LSEFKIVNQD (116 aa). Mn(2+) is bound at residue His-448.

It belongs to the peptidase M20 family. As to quaternary structure, homodimer. It depends on Mn(2+) as a cofactor. The cofactor is Ni(2+). Co(2+) is required as a cofactor.

Its subcellular location is the endoplasmic reticulum. The enzyme catalyses (S)-ureidoglycolate + H2O + 2 H(+) = glyoxylate + 2 NH4(+) + CO2. It participates in nitrogen metabolism; (S)-allantoin degradation; glyoxylate from (S)-ureidoglycolate: step 1/1. Involved in the catabolism of purine nucleotides. Can use (S)-ureidoglycolate as substrate, but not (R)-ureidoglycolate or allantoate. The sequential activity of AAH, UGLYAH and UAH allows a complete purine breakdown without the intermediate generation of urea. In Arabidopsis thaliana (Mouse-ear cress), this protein is Ureidoglycolate hydrolase.